Consider the following 396-residue polypeptide: S-adenosylmethionine synthase (396 aa).

Histidine 16 contacts ATP. Aspartate 18 is a binding site for Mg(2+). Position 44 (glutamate 44) interacts with K(+). Residues glutamate 57 and glutamine 100 each coordinate L-methionine. The interval 100–110 (QSVDIAQGVDR) is flexible loop. ATP-binding positions include 165–167 (DAK), aspartate 240, 246–247 (RK), alanine 263, and lysine 267. Aspartate 240 contributes to the L-methionine binding site. An L-methionine-binding site is contributed by lysine 271.

The protein belongs to the AdoMet synthase family. Homotetramer; dimer of dimers. Mg(2+) serves as cofactor. Requires K(+) as cofactor.

Its subcellular location is the cytoplasm. The enzyme catalyses L-methionine + ATP + H2O = S-adenosyl-L-methionine + phosphate + diphosphate. It participates in amino-acid biosynthesis; S-adenosyl-L-methionine biosynthesis; S-adenosyl-L-methionine from L-methionine: step 1/1. Its function is as follows. Catalyzes the formation of S-adenosylmethionine (AdoMet) from methionine and ATP. The overall synthetic reaction is composed of two sequential steps, AdoMet formation and the subsequent tripolyphosphate hydrolysis which occurs prior to release of AdoMet from the enzyme. This is S-adenosylmethionine synthase from Pseudomonas putida (strain W619).